A 43-amino-acid polypeptide reads, in one-letter code: Defensin-B (43 aa).

Disulfide bonds link cysteine 3–cysteine 34, cysteine 20–cysteine 39, and cysteine 24–cysteine 41.

Its subcellular location is the secreted. Functionally, antibacterial protein. Strong activity against the Gram-positive bacteria M.luteus, B.megaterium and S.aureus. Reduced activity against Gram-positive bacterium B.subtilis and weak activity against Gram-negative bacterium X.japonicus. No detectable activity against the Gram-negative bacteria E.asbriae, E.coli, P.aeruginosa and S.marcescens. The sequence is that of Defensin-B from Anomala cuprea (Cupreous chafer beetle).